The following is a 205-amino-acid chain: LexA repressor (205 aa).

Positions 28 to 48 (RAEIARRLGFKSANAAEEHLK) form a DNA-binding region, H-T-H motif. Catalysis depends on for autocatalytic cleavage activity residues Ser-122 and Lys-159.

Belongs to the peptidase S24 family. Homodimer.

It catalyses the reaction Hydrolysis of Ala-|-Gly bond in repressor LexA.. In terms of biological role, represses a number of genes involved in the response to DNA damage (SOS response), including recA and lexA. In the presence of single-stranded DNA, RecA interacts with LexA causing an autocatalytic cleavage which disrupts the DNA-binding part of LexA, leading to derepression of the SOS regulon and eventually DNA repair. The chain is LexA repressor from Shewanella loihica (strain ATCC BAA-1088 / PV-4).